Consider the following 374-residue polypeptide: MLSWLLVFSILVLLAQGVSSWENPQTDQVSEGLQQLFGNISQLFEKGILGRDDVFTMVSREEWGAEAIGCSSKLSRPVDVLVIHHIPGLECHNKTVCSQKLRELQAYHIHNSWCDVAYNFLVGDDGRVYEGVGWNVQGSHDQGYKNISLGVAFFGTQEGHSPSPVALSAMKGLISYAVKKGHLSSKYIQPLLAKSEDCLVPPQKGKQKKACPHIVPRSVWGARDSHCSRMTLPAKYAIILHTAGRTCSQPDECRLLVRDLQSFFMNRLNACDIGYNFLVGQDGGVYEGVGWNNQGSKTDSYNDISLSITFMGTFTGSPPNAAALEAAQDLIRCAVVKGYLTPNYLLMGHSDVSNTLSPGQALYNIIKTWPHFKH.

The signal sequence occupies residues 1 to 20 (MLSWLLVFSILVLLAQGVSS). Asn-39, Asn-93, and Asn-146 each carry an N-linked (GlcNAc...) asparagine glycan. 2 consecutive N-acetylmuramoyl-L-alanine amidase domains span residues 76 to 212 (RPVD…KACP) and 233 to 359 (PAKY…LSPG). 3 disulfides stabilise this stretch: Cys-211–Cys-333, Cys-227–Cys-271, and Cys-247–Cys-253. Tyr-275 serves as a coordination point for peptidoglycan. 2 interaction with murein regions span residues 294 to 303 (QGSKTDSYND) and 354 to 355 (NT).

It belongs to the N-acetylmuramoyl-L-alanine amidase 2 family. In terms of assembly, homodimer; disulfide-linked. Heterodimer with PGLYRP3; disulfide-linked. In terms of tissue distribution, ubiquitous.

The protein localises to the secreted. In terms of biological role, pattern receptor that binds to murein peptidoglycans (PGN) of Gram-positive bacteria. Has bactericidal activity towards Gram-positive bacteria. May kill Gram-positive bacteria by interfering with peptidoglycan biosynthesis. Also binds to Gram-negative bacteria, and has bacteriostatic activity towards Gram-negative bacteria. Plays a role in innate immunity. The sequence is that of Peptidoglycan recognition protein 4 (Pglyrp4) from Mus musculus (Mouse).